The sequence spans 133 residues: Basic leucine zipper transcriptional factor ATF-like 3 (133 aa).

Positions 1-68 (MSQGPPAGGV…EHESLEQENS (68 aa)) are disordered. Phosphoserine is present on residues serine 2 and serine 24. Over residues 11–24 (LQSSVAAPGNQPQS) the composition is skewed to polar residues. The bZIP domain maps to 28-91 (DDRKVRRREK…RHLTEALKEH (64 aa)). A basic motif region spans residues 30–55 (RKVRRREKNRVAAQRSRKKQTQKSDK). The segment covering 51-68 (QKSDKLHEEHESLEQENS) has biased composition (basic and acidic residues). The leucine-zipper stretch occupies residues 56-84 (LHEEHESLEQENSVLRREIAKLKEELRHL).

It belongs to the bZIP family. In terms of assembly, heterodimer; heterodimerizes with JUN family proteins. Interacts with JUN. Ubiquitously expressed.

The protein resides in the nucleus. In terms of biological role, AP-1 family transcription factor that controls the differentiation of CD8(+) thymic conventional dendritic cells in the immune system. Acts via the formation of a heterodimer with JUN family proteins that recognizes and binds DNA sequence 5'-TGA[CG]TCA-3' and regulates expression of target genes. Required for development of CD8-alpha(+) classical dendritic cells (cDCs) and related CD103(+) dendritic cells that cross-present antigens to CD8 T-cells and produce interleukin-12 (IL12) in response to pathogens. This is Basic leucine zipper transcriptional factor ATF-like 3 (Batf3) from Rattus norvegicus (Rat).